The sequence spans 211 residues: Protein-L-isoaspartate O-methyltransferase (211 aa).

Residue Ser62 is part of the active site.

It belongs to the methyltransferase superfamily. L-isoaspartyl/D-aspartyl protein methyltransferase family.

Its subcellular location is the cytoplasm. It carries out the reaction [protein]-L-isoaspartate + S-adenosyl-L-methionine = [protein]-L-isoaspartate alpha-methyl ester + S-adenosyl-L-homocysteine. Functionally, catalyzes the methyl esterification of L-isoaspartyl residues in peptides and proteins that result from spontaneous decomposition of normal L-aspartyl and L-asparaginyl residues. It plays a role in the repair and/or degradation of damaged proteins. This chain is Protein-L-isoaspartate O-methyltransferase, found in Shewanella denitrificans (strain OS217 / ATCC BAA-1090 / DSM 15013).